Reading from the N-terminus, the 208-residue chain is EF-hand protein 5 variant 2 (208 aa).

The tract at residues 1 to 35 is disordered; it reads MQARGTVKVQGDANVDGKMSTGQHPHHQHLNSTQA. EF-hand domains follow at residues 64-98, 99-134, 135-170, and 171-206; these read MAEG…HLTE, EEFH…EVDD, TMAD…LAER, and STPE…SRVN. Ca(2+) contacts are provided by Glu118, Asp123, Asp148, Thr152, and Tyr154.

The polypeptide is EF-hand protein 5 variant 2 (Trypanosoma cruzi).